The primary structure comprises 502 residues: ATP synthase subunit alpha (502 aa).

Residue 169-176 coordinates ATP; that stretch reads GDRATGKT.

This sequence belongs to the ATPase alpha/beta chains family. As to quaternary structure, F-type ATPases have 2 components, CF(1) - the catalytic core - and CF(0) - the membrane proton channel. CF(1) has five subunits: alpha(3), beta(3), gamma(1), delta(1), epsilon(1). CF(0) has three main subunits: a(1), b(2) and c(9-12). The alpha and beta chains form an alternating ring which encloses part of the gamma chain. CF(1) is attached to CF(0) by a central stalk formed by the gamma and epsilon chains, while a peripheral stalk is formed by the delta and b chains.

The protein localises to the cell inner membrane. It catalyses the reaction ATP + H2O + 4 H(+)(in) = ADP + phosphate + 5 H(+)(out). In terms of biological role, produces ATP from ADP in the presence of a proton gradient across the membrane. The alpha chain is a regulatory subunit. In Hydrogenobaculum sp. (strain Y04AAS1), this protein is ATP synthase subunit alpha.